The following is a 187-amino-acid chain: Phosphatidylethanolamine-binding protein 1 (187 aa).

Phosphoserine is present on residues serine 6 and serine 13. Threonine 42 carries the phosphothreonine modification. Serine 52 and serine 98 each carry phosphoserine. Positions 93-134 (KGGNISSGTVLSDYVGSGPPKGTGLHRYVWLVYEQDGPLKCD) are interaction with RAF1.

The protein belongs to the phosphatidylethanolamine-binding protein family. Has a tendency to form dimers by disulfide cross-linking. Interacts with RAF1 and this interaction is enhanced if RAF1 is phosphorylated on residues 'Ser-338', 'Ser-339', 'Tyr-340' and 'Tyr-341'. Interacts with ALOX15; in response to IL13/interleukin-13, prevents the interaction of PEBP1 with RAF1 to activate the ERK signaling cascade.

Its subcellular location is the cytoplasm. Binds ATP, opioids and phosphatidylethanolamine. Has lower affinity for phosphatidylinositol and phosphatidylcholine. Serine protease inhibitor which inhibits thrombin, neuropsin and chymotrypsin but not trypsin, tissue type plasminogen activator and elastase. Inhibits the kinase activity of RAF1 by inhibiting its activation and by dissociating the RAF1/MEK complex and acting as a competitive inhibitor of MEK phosphorylation. Its function is as follows. HCNP may be involved in the function of the presynaptic cholinergic neurons of the central nervous system. HCNP increases the production of choline acetyltransferase but not acetylcholinesterase. Seems to be mediated by a specific receptor. The polypeptide is Phosphatidylethanolamine-binding protein 1 (PEBP1) (Oryctolagus cuniculus (Rabbit)).